Here is a 476-residue protein sequence, read N- to C-terminus: Growth arrest-specific protein 7 (476 aa).

Positions 1-62 (MSGARCRTLY…PASYVQLLEK (62 aa)) constitute an SH3 domain. Positions 77-110 (VILPPGWQSYLSPQGRRYYVNTTTNETTWERPSS) constitute a WW domain. The tract at residues 100–171 (TNETTWERPS…SSPSKKQSKE (72 aa)) is disordered. The segment covering 108–120 (PSSSPGIPASPGS) has biased composition (low complexity). Residues S117 and S163 each carry the phosphoserine modification. The span at 150–171 (RKSTGDSQNLGSSSPSKKQSKE) shows a compositional bias: polar residues. One can recognise an F-BAR domain in the interval 196 to 456 (TEWSYCDYFW…LLRKVDPAKD (261 aa)). The stretch at 309 to 419 (ENFKKDMKKC…RLEVERVEMI (111 aa)) forms a coiled coil.

The protein resides in the cytoplasm. Functionally, may play a role in promoting maturation and morphological differentiation of cerebellar neurons. In Homo sapiens (Human), this protein is Growth arrest-specific protein 7 (GAS7).